A 149-amino-acid chain; its full sequence is 1,4-dihydroxy-2-naphthoyl-CoA hydrolase (149 aa).

The active site involves Asp19.

Belongs to the 4-hydroxybenzoyl-CoA thioesterase family. DHNA-CoA hydrolase subfamily.

The enzyme catalyses 1,4-dihydroxy-2-naphthoyl-CoA + H2O = 1,4-dihydroxy-2-naphthoate + CoA + H(+). It functions in the pathway cofactor biosynthesis; phylloquinone biosynthesis. Its pathway is quinol/quinone metabolism; 1,4-dihydroxy-2-naphthoate biosynthesis; 1,4-dihydroxy-2-naphthoate from chorismate: step 7/7. Its function is as follows. Catalyzes the hydrolysis of 1,4-dihydroxy-2-naphthoyl-CoA (DHNA-CoA) to 1,4-dihydroxy-2-naphthoate (DHNA), a reaction involved in phylloquinone (vitamin K1) biosynthesis. The chain is 1,4-dihydroxy-2-naphthoyl-CoA hydrolase from Synechococcus sp. (strain CC9605).